Here is a 145-residue protein sequence, read N- to C-terminus: Phospholipase A2, membrane associated (145 aa).

Residues 1 to 20 (MKLLLLLLVVMASDLPQAHG) form the signal peptide. Disulfide bonds link C46/C138, C48/C64, C63/C118, C69/C145, C70/C111, C79/C104, and C97/C109. Ca(2+)-binding residues include H47, G49, and G51. H67 is a catalytic residue. Residue D68 coordinates Ca(2+). D112 is an active-site residue.

Belongs to the phospholipase A2 family. Requires Ca(2+) as cofactor. As to expression, alveolar macrophages, and at much lower levels in peripheral blood monocytes and peritoneal macrophages.

The protein resides in the secreted. It is found in the cell membrane. Its subcellular location is the mitochondrion outer membrane. The enzyme catalyses a 1,2-diacyl-sn-glycero-3-phosphoethanolamine + H2O = a 1-acyl-sn-glycero-3-phosphoethanolamine + a fatty acid + H(+). It catalyses the reaction 1-hexadecanoyl-2-(9Z-octadecenoyl)-sn-glycero-3-phosphoethanolamine + H2O = 1-hexadecanoyl-sn-glycero-3-phosphoethanolamine + (9Z)-octadecenoate + H(+). The catalysed reaction is 1-hexadecanoyl-2-(9Z,12Z-octadecadienoyl)-sn-glycero-3-phosphoethanolamine + H2O = 1-hexadecanoyl-sn-glycero-3-phosphoethanolamine + (9Z,12Z)-octadecadienoate + H(+). It carries out the reaction 1-hexadecanoyl-2-(5Z,8Z,11Z,14Z-eicosatetraenoyl)-sn-glycero-3-phosphoethanolamine + H2O = 1-hexadecanoyl-sn-glycero-3-phosphoethanolamine + (5Z,8Z,11Z,14Z)-eicosatetraenoate + H(+). The enzyme catalyses N-hexadecanoyl-1,2-di-(9Z-octadecenoyl)-sn-glycero-3-phosphoethanolamine + H2O = N-hexadecanoyl-1-(9Z-octadecenoyl)-sn-glycero-3-phosphoethanolamine + (9Z)-octadecenoate + H(+). It catalyses the reaction 1,2-dihexadecanoyl-sn-glycero-3-phospho-(1'-sn-glycerol) + H2O = 1-hexadecanoyl-sn-glycero-3-phospho-(1'-sn-glycerol) + hexadecanoate + H(+). The catalysed reaction is 1-hexadecanoyl-2-(9Z-octadecenoyl)-sn-glycero-3-phosphoglycerol + H2O = 1-hexadecanoyl-sn-glycero-3-phosphoglycerol + (9Z)-octadecenoate + H(+). It carries out the reaction 1-hexadecanoyl-2-(9Z-octadecenoyl)-sn-glycero-3-phospho-(1'-sn-glycerol) + H2O = 1-hexadecanoyl-sn-glycero-3-phospho-(1'-sn-glycerol) + (9Z)-octadecenoate + H(+). The enzyme catalyses a 1,2-diacyl-sn-glycero-3-phosphocholine + H2O = a 1-acyl-sn-glycero-3-phosphocholine + a fatty acid + H(+). It catalyses the reaction 1,2-dihexadecanoyl-sn-glycero-3-phosphocholine + H2O = 1-hexadecanoyl-sn-glycero-3-phosphocholine + hexadecanoate + H(+). The catalysed reaction is 1-hexadecanoyl-2-(9Z-octadecenoyl)-sn-glycero-3-phosphocholine + H2O = 1-hexadecanoyl-sn-glycero-3-phosphocholine + (9Z)-octadecenoate + H(+). It carries out the reaction 1-hexadecanoyl-2-(9Z,12Z-octadecadienoyl)-sn-glycero-3-phosphocholine + H2O = (9Z,12Z)-octadecadienoate + 1-hexadecanoyl-sn-glycero-3-phosphocholine + H(+). The enzyme catalyses 1-hexadecanoyl-2-(4Z,7Z,10Z,13Z,16Z,19Z-docosahexaenoyl)-sn-glycero-3-phosphocholine + H2O = (4Z,7Z,10Z,13Z,16Z,19Z)-docosahexaenoate + 1-hexadecanoyl-sn-glycero-3-phosphocholine + H(+). Functionally, secretory calcium-dependent phospholipase A2 that primarily targets extracellular phospholipids with implications in host antimicrobial defense, inflammatory response and tissue regeneration. Hydrolyzes the ester bond of the fatty acyl group attached at sn-2 position of phospholipids (phospholipase A2 activity) with preference for phosphatidylethanolamines and phosphatidylglycerols over phosphatidylcholines. Contributes to lipid remodeling of cellular membranes and generation of lipid mediators involved in pathogen clearance. Displays bactericidal activity against Gram-positive bacteria by directly hydrolyzing phospholipids of the bacterial membrane. Upon sterile inflammation, targets membrane phospholipids of extracellular mitochondria released from activated platelets, generating free unsaturated fatty acids such as arachidonate that is used by neighboring leukocytes to synthesize inflammatory eicosanoids such as leukotrienes. Simultaneously, by compromising mitochondrial membrane integrity, promotes the release in circulation of potent damage-associated molecular pattern molecules that activate the innate immune response. Plays a stem cell regulator role in the intestinal crypt. Within intracellular compartment mediates Paneth cell differentiation and its stem cell supporting functions by inhibiting Wnt signaling pathway in intestinal stem cell (ICS). Secreted in the intestinal lumen upon inflammation, acts in an autocrine way and promotes prostaglandin E2 synthesis that stimulates Wnt signaling pathway in ICS cells and tissue regeneration. May play a role in the biosynthesis of N-acyl ethanolamines that regulate energy metabolism and inflammation. Hydrolyzes N-acyl phosphatidylethanolamines to N-acyl lysophosphatidylethanolamines, which are further cleaved by a lysophospholipase D to release N-acyl ethanolamines. Independent of its catalytic activity, acts as a ligand for integrins. Binds to and activates integrins ITGAV:ITGB3, ITGA4:ITGB1 and ITGA5:ITGB1. Binds to a site (site 2) which is distinct from the classical ligand-binding site (site 1) and induces integrin conformational changes and enhanced ligand binding to site 1. Induces cell proliferation in an integrin-dependent manner. The protein is Phospholipase A2, membrane associated (PLA2G2A) of Cavia porcellus (Guinea pig).